An 878-amino-acid chain; its full sequence is Enoyl-CoA isomerase/hydratase claC (878 aa).

Residues 541–561 (VGPASTEATSPVVEPSTMESD) are disordered. Substrate-binding positions include 677–681 (AGADL) and G724.

This sequence belongs to the enoyl-CoA hydratase/isomerase family.

Its pathway is secondary metabolite biosynthesis. Functionally, enoyl-CoA isomerase/hydratase; part of the cla gene cluster that produces clavatol and ortho-quinone methide. The clavatol biosynthesis cluster cla and the terrestric acid cluster tra are both involved in the production of peniphenones and penilactones. The non-reducing PKS claF is responsible for the formation of clavatol from successive condensations of 3 malonyl-CoA units, presumably with a simple acetyl-CoA starter unit, and 2 methylation steps. The esterase claE probably collaborates with claF by catalyzing the hydrolysis of ACP-bound acyl intermediates to free the ACP from stalled intermediates. The clavatol oxidase claD then converts clavatol to hydroxyclavatol. Spontaneous dehydration of hydroxyclavatol leads to the accumulation of the highly active ortho-quinone methide. On the other hand, the PKS-NRPS hybrid traA is involved in the formation of crustosic acid, with the help of traB and traD. The polyketide synthase module (PKS) of traA is responsible for the synthesis of the polyketide backbone via the condensation of an acetyl-CoA starter unit with 3 malonyl-CoA units. The downstream nonribosomal peptide synthetase (NRPS) module then amidates the carboxyl end of the polyketide with L-malic acid. Because traA lacks a designated enoylreductase (ER) domain, the required activity is provided the enoyl reductase traG. Crustosic acid undergoes decarboxylation and isomerization to the terrestric acid, catalyzed by the 2-oxoglutarate-dependent dioxygenase traH. Both acids are further converted to the 2 gamma-butyrolactones (R)-5-methyltetronic acid and (S)-5-carboxylmethyltetronic acid, with involvement of the cytochrome P450 monooxygenase claJ. Spontaneous addition of the methide to these gamma-butyrolactones leads to peniphenone D and penilactone D, which undergo again stereospecific attacking by methide to give penilactones A and B. The function of the enoyl-CoA isomerase/hydratase claC has not been investigated yet. The sequence is that of Enoyl-CoA isomerase/hydratase claC from Penicillium crustosum (Blue mold fungus).